The sequence spans 187 residues: Elongation factor P (187 aa).

Belongs to the elongation factor P family.

The protein localises to the cytoplasm. The protein operates within protein biosynthesis; polypeptide chain elongation. In terms of biological role, involved in peptide bond synthesis. Stimulates efficient translation and peptide-bond synthesis on native or reconstituted 70S ribosomes in vitro. Probably functions indirectly by altering the affinity of the ribosome for aminoacyl-tRNA, thus increasing their reactivity as acceptors for peptidyl transferase. The polypeptide is Elongation factor P (Corynebacterium urealyticum (strain ATCC 43042 / DSM 7109)).